The following is a 283-amino-acid chain: Protein/nucleic acid deglycase HchA (283 aa).

Zn(2+) contacts are provided by His-86, Glu-91, and His-123. Residue Cys-185 is the Nucleophile of the active site.

It belongs to the peptidase C56 family. HchA subfamily. In terms of assembly, homodimer.

The protein resides in the cytoplasm. It catalyses the reaction N(omega)-(1-hydroxy-2-oxopropyl)-L-arginyl-[protein] + H2O = lactate + L-arginyl-[protein] + H(+). It carries out the reaction N(6)-(1-hydroxy-2-oxopropyl)-L-lysyl-[protein] + H2O = lactate + L-lysyl-[protein] + H(+). The enzyme catalyses S-(1-hydroxy-2-oxopropyl)-L-cysteinyl-[protein] + H2O = lactate + L-cysteinyl-[protein] + H(+). The catalysed reaction is N(omega)-(1-hydroxy-2-oxoethyl)-L-arginyl-[protein] + H2O = L-arginyl-[protein] + glycolate + H(+). It catalyses the reaction N(6)-(1-hydroxy-2-oxoethyl)-L-lysyl-[protein] + H2O = glycolate + L-lysyl-[protein] + H(+). It carries out the reaction S-(1-hydroxy-2-oxoethyl)-L-cysteinyl-[protein] + H2O = glycolate + L-cysteinyl-[protein] + H(+). The enzyme catalyses N(2)-(1-hydroxy-2-oxopropyl)-dGTP + H2O = lactate + dGTP + H(+). The catalysed reaction is N(2)-(1-hydroxy-2-oxopropyl)-GTP + H2O = lactate + GTP + H(+). It catalyses the reaction N(2)-(1-hydroxy-2-oxopropyl)-GDP + H2O = lactate + GDP + H(+). It carries out the reaction N(2)-(1-hydroxy-2-oxopropyl)-GMP + H2O = lactate + GMP + H(+). The enzyme catalyses N(2)-(1-hydroxy-2-oxoethyl)-dGTP + H2O = dGTP + glycolate + H(+). The catalysed reaction is N(2)-(1-hydroxy-2-oxoethyl)-GTP + H2O = glycolate + GTP + H(+). It catalyses the reaction N(2)-(1-hydroxy-2-oxoethyl)-GDP + H2O = glycolate + GDP + H(+). It carries out the reaction N(2)-(1-hydroxy-2-oxoethyl)-GMP + H2O = glycolate + GMP + H(+). The enzyme catalyses an N(2)-(1-hydroxy-2-oxopropyl)-guanosine in RNA + H2O = a guanosine in RNA + lactate + H(+). The catalysed reaction is an N(2)-(1-hydroxy-2-oxopropyl)-2'-deoxyguanosine in DNA + H2O = a 2'-deoxyguanosine in DNA + lactate + H(+). It catalyses the reaction an N(2)-(1-hydroxy-2-oxoethyl)-guanosine in RNA + H2O = a guanosine in RNA + glycolate + H(+). It carries out the reaction an N(2)-(1-hydroxy-2-oxoethyl)-2'-deoxyguanosine in DNA + H2O = a 2'-deoxyguanosine in DNA + glycolate + H(+). Functionally, protein and nucleotide deglycase that catalyzes the deglycation of the Maillard adducts formed between amino groups of proteins or nucleotides and reactive carbonyl groups of glyoxals. Thus, functions as a protein deglycase that repairs methylglyoxal- and glyoxal-glycated proteins, and releases repaired proteins and lactate or glycolate, respectively. Deglycates cysteine, arginine and lysine residues in proteins, and thus reactivates these proteins by reversing glycation by glyoxals. Acts on early glycation intermediates (hemithioacetals and aminocarbinols), preventing the formation of Schiff bases and advanced glycation endproducts (AGE). Also functions as a nucleotide deglycase able to repair glycated guanine in the free nucleotide pool (GTP, GDP, GMP, dGTP) and in DNA and RNA. Is thus involved in a major nucleotide repair system named guanine glycation repair (GG repair), dedicated to reversing methylglyoxal and glyoxal damage via nucleotide sanitization and direct nucleic acid repair. Plays an important role in protecting cells from carbonyl stress. The protein is Protein/nucleic acid deglycase HchA of Escherichia coli O81 (strain ED1a).